A 682-amino-acid chain; its full sequence is MKKILGFLFIVCSLGLSATVHGETTNSQQLLSNNINTELINHNSNAILSSTEGSTTDSINLGAQSPAVKSTTRTELDVTGAAKTLLQTSAVQKEMKVSLQETQVSSEFSKRDSVTNKEAVPVSKDELLEQSEVVVSTSSIQKNKILDNKKKRANFVTSSPLIKEKPSNSKDASGVIDNSASPLSYRKAKEVVSLRQPLKNQKVEAQPLLISNSSEKKASVYTNSHDFWDYQWDMKYVTNNGESYALYQPSKKISVGIIDSGIMEEHPDLSNSLGNYFKNLVPKGGFDNEEPDETGNPSDIVDKMGHGTEVAGQITANGNILGVAPGITVNIYRVFGENLSKSEWVARAIRRAADDGNKVINISAGQYLMISGSYDDGTNDYQEYLNYKSAINYATAKGSIVVAALGNDSLNIQDNQTMINFLKRFRSIKVPGKVVDAPSVFEDVIAVGGIDGYGNISDFSNIGADAIYAPAGTTANFKKYGQDKFVSQGYYLKDWLFTTANTGWYQYVYGNSFATPKVSGALALVVDKYGIKNPNQLKRFLLMNSPEVNGNRVLNIVDLLNGKNKAFSLDTDKGQDDAINHKSMENLKESRDTMKQEQDKEIQRNTNNNFSIKNDFHNISKEVISVDYNINQKMANNRNSRGAVSVRSQEILPVTGDGEDFLPALGIVCISILGILKRKTKN.

A signal peptide spans 1-22 (MKKILGFLFIVCSLGLSATVHG). Positions 23 to 195 (ETTNSQQLLS…RKAKEVVSLR (173 aa)) are excised as a propeptide. A Peptidase S8 domain is found at 231–566 (QWDMKYVTNN…VDLLNGKNKA (336 aa)). Residues Asp-259, His-306, and Ser-512 each act as charge relay system in the active site. Positions 652–656 (LPVTG) match the LPXTG sorting signal motif. Thr-655 carries the post-translational modification Pentaglycyl murein peptidoglycan amidated threonine. Residues 656–682 (GDGEDFLPALGIVCISILGILKRKTKN) constitute a propeptide, removed by sortase.

The protein belongs to the peptidase S8 family.

It localises to the secreted. The protein resides in the cell wall. Its pathway is antibiotic biosynthesis; nisin biosynthesis. In terms of biological role, cleaves the lantibiotic nisin precursor peptide. The chain is Nisin leader peptide-processing serine protease NisP (nisP) from Lactococcus lactis subsp. lactis (Streptococcus lactis).